The following is a 688-amino-acid chain: PTS system glucoside-specific EIICBA component (688 aa).

The 425-residue stretch at 3 to 427 folds into the PTS EIIC type-1 domain; the sequence is KKLFGQLQRI…FKLKTPGRED (425 aa). The next 10 membrane-spanning stretches (helical) occupy residues 12–32, 81–101, 137–157, 182–202, 223–243, 284–304, 315–335, 340–360, 364–384, and 395–415; these read IGKALMLPVAILPAAGILLAF, LGLAGGDGVAALAALVGYLIM, LVLGIPTLQTGVFGGIIMGAL, FVPIVTSVVAIATGVLLSFAW, LTTFIFGIIERSLIPFGLHHI, AFTTGKYPFMMFGLPAAAFAI, VVGGLMLSAGLTAFLTGITEP, FLFVAPVLYGIHVLLAGTSFL, LLGVKIGMTFSGGFIDYILYG, and LVIPVGIVYAIVYYFLFDFAI. The region spanning 438-519 is the PTS EIIB type-1 domain; sequence AKLPFDVLDA…AKIMSGEITK (82 aa). Cys-460 (phosphocysteine intermediate; for EIIB activity) is an active-site residue. Residues 560-664 enclose the PTS EIIA type-1 domain; it reads DQVFAGKMMG…SIVTPMIITN (105 aa). Catalysis depends on His-612, which acts as the Tele-phosphohistidine intermediate; for EIIA activity.

It localises to the cell membrane. In terms of biological role, the phosphoenolpyruvate-dependent sugar phosphotransferase system (sugar PTS), a major carbohydrate active -transport system, catalyzes the phosphorylation of incoming sugar substrates concomitantly with their translocation across the cell membrane. This system is involved in alpha- and beta-glucoside transport. In Staphylococcus aureus (strain Mu3 / ATCC 700698), this protein is PTS system glucoside-specific EIICBA component (glcB).